A 462-amino-acid polypeptide reads, in one-letter code: Probable DNA-directed RNA polymerase subunit 343L (462 aa).

The protein belongs to the RNA polymerase beta' chain family.

It carries out the reaction RNA(n) + a ribonucleoside 5'-triphosphate = RNA(n+1) + diphosphate. Its function is as follows. Component of the DNA-dependent RNA polymerase that catalyzes the transcription in the cytoplasm of viral DNA into RNA using the four ribonucleoside triphosphates as substrates. In Acheta domesticus (House cricket), this protein is Probable DNA-directed RNA polymerase subunit 343L.